The primary structure comprises 311 residues: Aspartate carbamoyltransferase catalytic subunit (311 aa).

Carbamoyl phosphate is bound by residues arginine 55 and threonine 56. An L-aspartate-binding site is contributed by lysine 85. Carbamoyl phosphate-binding residues include arginine 106, histidine 135, and glutamine 138. Positions 168 and 230 each coordinate L-aspartate. The carbamoyl phosphate site is built by leucine 268 and proline 269.

The protein belongs to the aspartate/ornithine carbamoyltransferase superfamily. ATCase family. As to quaternary structure, heterododecamer (2C3:3R2) of six catalytic PyrB chains organized as two trimers (C3), and six regulatory PyrI chains organized as three dimers (R2).

The enzyme catalyses carbamoyl phosphate + L-aspartate = N-carbamoyl-L-aspartate + phosphate + H(+). It participates in pyrimidine metabolism; UMP biosynthesis via de novo pathway; (S)-dihydroorotate from bicarbonate: step 2/3. Its function is as follows. Catalyzes the condensation of carbamoyl phosphate and aspartate to form carbamoyl aspartate and inorganic phosphate, the committed step in the de novo pyrimidine nucleotide biosynthesis pathway. This chain is Aspartate carbamoyltransferase catalytic subunit, found in Buchnera aphidicola subsp. Schizaphis graminum (strain Sg).